Reading from the N-terminus, the 1683-residue chain is ABC transporter 7 (1683 aa).

The helical transmembrane segment at 24 to 44 (DYLRILLPAVVIGLSVLNLGF) threads the bilayer. The disordered stretch occupies residues 53-93 (RSKSPSTHAYAPVSNGDNSRPGAHRTDISPDDDAIAQDDED). Residues 81-93 (SPDDDAIAQDDED) show a composition bias toward acidic residues. 4 helical membrane passes run 127 to 147 (LSVV…VIAL), 157 to 177 (TLTG…LATL), 190 to 210 (HLWN…IGIF), and 221 to 241 (LAQI…FMAI). A glycan (N-linked (GlcNAc...) asparagine) is linked at N247. The next 2 helical transmembrane spans lie at 336-356 (GWAV…KAIL) and 368-388 (SVVW…SLGD). One can recognise an ABC transmembrane type-1 1 domain in the interval 338-664 (AVMSGMFTFA…LGDMLAHVQE (327 aa)). A disordered region spans residues 451-473 (GDNDESEDGKDGDKDKEDSSDEQ). N-linked (GlcNAc...) asparagine glycosylation occurs at N489. Helical transmembrane passes span 496-516 (YLHF…VLLY) and 518-538 (VLGM…PVNI). The N-linked (GlcNAc...) asparagine glycan is linked to N545. The next 2 membrane-spanning stretches (helical) occupy residues 602-622 (VWAC…FFSF) and 632-648 (PLHP…FMLL). The 250-residue stretch at 700–949 (IALKDAAFIW…GALGEEIAQK (250 aa)) folds into the ABC transporter 1 domain. An ATP-binding site is contributed by 742 to 749 (GPTGSGKT). The interval 952 to 998 (SETPNISRIPSRVPSSVGEGSGNTLLDTDGDDHLSKPKNAKKAKKAE) is disordered. N956 is a glycosylation site (N-linked (GlcNAc...) asparagine). A helical transmembrane segment spans residues 1016–1036 (LYLASMGSWWFWVVAGCIFIS). Residues 1028-1351 (VVAGCIFISQ…NILWLVRLYS (324 aa)) enclose the ABC transmembrane type-1 2 domain. N1097 carries N-linked (GlcNAc...) asparagine glycosylation. 3 helical membrane-spanning segments follow: residues 1111 to 1131 (AQYY…TAFL), 1182 to 1202 (VDQE…GITV), and 1204 to 1224 (VVLI…ITIA). N1277 carries N-linked (GlcNAc...) asparagine glycosylation. 2 helical membrane passes run 1304 to 1324 (LLGD…IGVI) and 1327 to 1347 (GWAG…LWLV). Residues 1392-1649 (VEFINYTTSY…GEGGSFKSMC (258 aa)) form the ABC transporter 2 domain. N-linked (GlcNAc...) asparagine glycans are attached at residues N1396 and N1411. An ATP-binding site is contributed by 1426 to 1433 (GRTGAGKS). 2 N-linked (GlcNAc...) asparagine glycosylation sites follow: N1541 and N1552.

It belongs to the ABC transporter superfamily.

The protein resides in the membrane. ABC transporter; part of the gene cluster that mediates the biosynthesis of pyriculol and pyriculariol, two heptaketides that induce lesion formation upon application on rice leaves but are dispensable for pathogenicity. With the MFS transporter MFS1, is most likely responsible for pyriculol and pyriculariol secretion and thereby may contribute to intrinsic resistance. This chain is ABC transporter 7, found in Pyricularia oryzae (strain 70-15 / ATCC MYA-4617 / FGSC 8958) (Rice blast fungus).